A 1190-amino-acid polypeptide reads, in one-letter code: JNK-interacting protein (1190 aa).

Positions 1-35 (MACNLSPVNEMADSITSSTPSEIVYGGPGSPDEHR) are disordered. The RH1 domain maps to 24-112 (VYGGPGSPDE…QTQYEREKAL (89 aa)). A coiled-coil region spans residues 78-165 (LDLAYLERDE…TDHASRLEER (88 aa)). The interval 263-364 (DEFSSDIEPS…DDTSDDGSLG (102 aa)) is disordered. Residues 277–292 (PQSSADALTSPITTKE) show a composition bias toward polar residues. Residues 383 to 491 (KNALNIVKND…EESIKWTEMQ (109 aa)) adopt a coiled-coil conformation. The RH2 domain maps to 456–542 (RKRFTRSEMQ…RASSSRGKMT (87 aa)). Residues 775–829 (EDGVPTYCSNDMKPSPKRTRDFSISEVAPVDSSAPVKEDPLPPPANRPGGRAALP) form a disordered region.

This sequence belongs to the JIP scaffold family. Expressed in neurons of the ventral cord, retrovesicular and preanal ganglia and nerve ring, intestinal cells, seam and hypodermal cells, body wall, head muscle and pharynx.

It is found in the cytoplasm. The protein resides in the perinuclear region. Functionally, the JNK-interacting protein (JIP) group of scaffold proteins selectively mediates JNK signaling by aggregating specific components of the MAPK cascade to form a functional JNK signaling module. May function as a regulator of synaptic vesicle transport, through interactions with the JNK-signaling components and motor proteins. Binds specific components of the JNK signaling pathway namely jnk-1, jkk-1 and sek-1. Associates with components of the motor protein, kinesin-1. Pre-assembled unc-16 scaffolding complexes are then transported as a cargo of kinesin, to the required subcellular location. Regulates the retrograde transport of autophagosomes from the neurites to the cell body of AIY interneurons. This is JNK-interacting protein from Caenorhabditis elegans.